Consider the following 953-residue polypeptide: Glutamate receptor 3.5 (953 aa).

Residues Met1–Gly29 form the signal peptide. Residues Ala30 to Thr606 lie on the Extracellular side of the membrane. 8 N-linked (GlcNAc...) asparagine glycosylation sites follow: Asn38, Asn95, Asn223, Asn371, Asn397, Asn436, Asn454, and Asn569. Residues Ile607–Leu627 form a helical membrane-spanning segment. Residues Glu628–Arg636 lie on the Cytoplasmic side of the membrane. The helical transmembrane segment at Gly637–Ser657 threads the bilayer. Residues His658–Arg668 lie on the Cytoplasmic side of the membrane. Residues Phe669–Leu689 traverse the membrane as a helical segment. Residues Thr690 to Ser850 are Extracellular-facing. Residues Phe851–Trp871 traverse the membrane as a helical segment. Over Lys872–Gln953 the chain is Cytoplasmic. The segment at Glu928 to Gln953 is disordered.

Belongs to the glutamate-gated ion channel (TC 1.A.10.1) family. As to quaternary structure, may form heteromers. In terms of tissue distribution, expressed predominantly in roots. Also detected in shoots.

It localises to the membrane. In terms of biological role, glutamate-gated receptor that probably acts as a non-selective cation channel. May be involved in light-signal transduction and calcium homeostasis via the regulation of calcium influx into cells. In Arabidopsis thaliana (Mouse-ear cress), this protein is Glutamate receptor 3.5 (GLR3.5).